The sequence spans 319 residues: MFKFDKEQMVIEIAGRKFGGQPGEYPTGLSGTIFYARHKIVEDEIKGIFDKSAAEALINKQAEMEDTTGNPALVQVFGGNPEALTKYIDFVAEVWDGPMLLDSTSGEARMAAATRATEAGYANQCIYNSINVSIDEAEFQNLVESDIEASIVLCFDPMDPSVEGKLNVLLDGGKTTDTGMLDLAEKAGIKYPLIDVACTPLGSGAGQSVRASFAVKAKLGLPVGSGIHNIPSAWDWLRDFRKGLREAGQTQLAKDVHHVCDIGANIVQTMGSGDFVLYGPIDNAELAFPAVAMTDMVIAETAKDMGTVPVDTHPINKLL.

Belongs to the MtrH family. The complex is composed of 8 subunits; MtrA, MtrB, MtrC, MtrD, MtrE, MtrF, MtrG and MtrH.

It carries out the reaction 5-methyl-5,6,7,8-tetrahydromethanopterin + coenzyme M + 2 Na(+)(in) = 5,6,7,8-tetrahydromethanopterin + methyl-coenzyme M + 2 Na(+)(out). It functions in the pathway one-carbon metabolism; methanogenesis from CO(2); methyl-coenzyme M from 5,10-methylene-5,6,7,8-tetrahydromethanopterin: step 2/2. In terms of biological role, part of a complex that catalyzes the formation of methyl-coenzyme M and tetrahydromethanopterin from coenzyme M and methyl-tetrahydromethanopterin. This is an energy-conserving, sodium-ion translocating step. MtrH catalyzes the transfer of the methyl group from methyl-tetrahydromethanopterin to the corrinoid prosthetic group of MtrA. The protein is Tetrahydromethanopterin S-methyltransferase subunit H of Methanococcus aeolicus (strain ATCC BAA-1280 / DSM 17508 / OCM 812 / Nankai-3).